Reading from the N-terminus, the 50-residue chain is Gene 38 protein (50 aa).

The protein is Gene 38 protein (38) of Mycobacterium (Mycobacteriophage D29).